A 227-amino-acid chain; its full sequence is MPQLRWLGHAAVELNLGGKHIVIDPMIKDNPVSPVKLNYFENNLNLIIVTHDHYDHLGDTVELMKINPKAYLFATYDLENYLATQFNIPWERMIPANVGGYIDFDGIKLALTKAVHSSEHSDPTGAIVSGEGVTIYHAGDTGLFEDMKLIGEIFKPDYVLLPIGGRFTMDPYQAAIAVEMLKPKKYAIPIHYNTWDLIKVDPNDFVKEVSKRGYKALVLQPGQSVEL.

The protein belongs to the UPF0173 family.

This Sulfurisphaera tokodaii (strain DSM 16993 / JCM 10545 / NBRC 100140 / 7) (Sulfolobus tokodaii) protein is UPF0173 metal-dependent hydrolase STK_14180.